We begin with the raw amino-acid sequence, 354 residues long: UDP-N-acetylglucosamine--N-acetylmuramyl-(pentapeptide) pyrophosphoryl-undecaprenol N-acetylglucosamine transferase (354 aa).

Residues 15–17, N127, R163, S191, I244, 263–268, and Q288 each bind UDP-N-acetyl-alpha-D-glucosamine; these read TGG and ALTVSE.

Belongs to the glycosyltransferase 28 family. MurG subfamily.

The protein localises to the cell inner membrane. It catalyses the reaction di-trans,octa-cis-undecaprenyl diphospho-N-acetyl-alpha-D-muramoyl-L-alanyl-D-glutamyl-meso-2,6-diaminopimeloyl-D-alanyl-D-alanine + UDP-N-acetyl-alpha-D-glucosamine = di-trans,octa-cis-undecaprenyl diphospho-[N-acetyl-alpha-D-glucosaminyl-(1-&gt;4)]-N-acetyl-alpha-D-muramoyl-L-alanyl-D-glutamyl-meso-2,6-diaminopimeloyl-D-alanyl-D-alanine + UDP + H(+). It participates in cell wall biogenesis; peptidoglycan biosynthesis. Cell wall formation. Catalyzes the transfer of a GlcNAc subunit on undecaprenyl-pyrophosphoryl-MurNAc-pentapeptide (lipid intermediate I) to form undecaprenyl-pyrophosphoryl-MurNAc-(pentapeptide)GlcNAc (lipid intermediate II). This chain is UDP-N-acetylglucosamine--N-acetylmuramyl-(pentapeptide) pyrophosphoryl-undecaprenol N-acetylglucosamine transferase, found in Vibrio cholerae serotype O1 (strain ATCC 39315 / El Tor Inaba N16961).